The chain runs to 339 residues: Putative zinc metalloprotease CA_C1796 (339 aa).

H20 lines the Zn(2+) pocket. E21 is an active-site residue. H24 serves as a coordination point for Zn(2+). The next 3 helical transmembrane spans lie at 91-113 (LSIV…CIVG), 275-297 (QLGV…LFLF), and 310-330 (VGFV…VVTI). The region spanning 99–177 (IMNLILAAVL…GIKLALKNNG (79 aa)) is the PDZ domain.

It belongs to the peptidase M50B family. Zn(2+) serves as cofactor.

It localises to the cell membrane. This Clostridium acetobutylicum (strain ATCC 824 / DSM 792 / JCM 1419 / IAM 19013 / LMG 5710 / NBRC 13948 / NRRL B-527 / VKM B-1787 / 2291 / W) protein is Putative zinc metalloprotease CA_C1796.